Consider the following 287-residue polypeptide: 1-acyl-sn-glycerol-3-phosphate acyltransferase alpha (287 aa).

Residues 1–26 (MELWPGAGTLLLLLFLLLLLLLPTLW) form the signal peptide. Residues 27 to 37 (FCSPSAKYFFK) are Lumenal-facing. The helical transmembrane segment at 38-58 (MAFYNGWILFLAVLAIPVCAV) threads the bilayer. Over 59-127 (RGRNVENMKI…PGRCVPIAKR (69 aa)) the chain is Cytoplasmic. Residues 104–109 (HQSSLD) carry the HXXXXD motif motif. A helical transmembrane segment spans residues 128–148 (ELLWAGSAGLACWLAGVIFID). At 149–287 (RKRTGDAISV…KPGGVGEAGL (139 aa)) the chain is on the lumenal side. An EGTR motif motif is present at residues 178–181 (EGTR).

Belongs to the 1-acyl-sn-glycerol-3-phosphate acyltransferase family.

The protein localises to the endoplasmic reticulum membrane. It catalyses the reaction a 1-acyl-sn-glycero-3-phosphate + an acyl-CoA = a 1,2-diacyl-sn-glycero-3-phosphate + CoA. The catalysed reaction is 1-(9Z-octadecenoyl)-sn-glycero-3-phosphate + (9Z)-octadecenoyl-CoA = 1,2-di-(9Z-octadecenoyl)-sn-glycero-3-phosphate + CoA. The enzyme catalyses 1-(9Z-octadecenoyl)-sn-glycero-3-phosphate + hexadecanoyl-CoA = 1-(9Z)-octadecenoyl-2-hexadecanoyl-sn-glycero-3-phosphate + CoA. It carries out the reaction heptadecanoyl-CoA + 1-(9Z-octadecenoyl)-sn-glycero-3-phosphate = 1-(9Z)-octadecenoyl-2-heptadecanoyl-sn-glycero-3-phosphate + CoA. It catalyses the reaction 1-(9Z-octadecenoyl)-sn-glycero-3-phosphate + octadecanoyl-CoA = 1-(9Z-octadecenoyl)-2-octadecanoyl-sn-glycero-3-phosphate + CoA. The catalysed reaction is 1-(9Z-octadecenoyl)-sn-glycero-3-phosphate + (9Z,12Z)-octadecadienoyl-CoA = 1-(9Z)-octadecenoyl-2-(9Z,12Z)-octadecadienoyl-sn-glycero-3-phosphate + CoA. The enzyme catalyses 1-(9Z-octadecenoyl)-sn-glycero-3-phosphate + tetradecanoyl-CoA = 1-(9Z)-octadecenoyl-2-tetradecanoyl-sn-glycero-3-phosphate + CoA. It carries out the reaction pentadecanoyl-CoA + 1-(9Z-octadecenoyl)-sn-glycero-3-phosphate = 1-(9Z)-octadecenoyl-2-pentadecanoyl-sn-glycero-3-phosphate + CoA. It catalyses the reaction 1-hexadecanoyl-sn-glycero-3-phosphate + (9Z)-octadecenoyl-CoA = 1-hexadecanoyl-2-(9Z-octadecenoyl)-sn-glycero-3-phosphate + CoA. The catalysed reaction is 1-(9Z,12Z,15Z)-octadecatrienoyl-sn-glycero-3-phosphate + (9Z)-octadecenoyl-CoA = 1-(9Z,12Z,15Z)-octadecatrienoyl-2-(9Z)-octadecenoyl-sn-glycero-3-phosphate + CoA. The enzyme catalyses 1-(6Z,9Z,12Z-octadecatrienoyl)-sn-glycero-3-phosphate + (9Z)-octadecenoyl-CoA = (6Z,9Z,12Z)-octadecatrienoyl-2-(9Z)-octadecenoyl-sn-glycero-3-phosphate + CoA. It carries out the reaction 1-eicosanoyl-sn-glycero-3-phosphate + (9Z)-octadecenoyl-CoA = 1-eicosanoyl-2-(9Z)-octadecenoyl-sn-glycero-3-phosphate + CoA. It catalyses the reaction 1-tetradecanoyl-sn-glycerol 3-phosphate + (9Z)-octadecenoyl-CoA = 1-tetradecanoyl-2-(9Z)-octadecenoyl-sn-glycero-3-phosphate + CoA. The catalysed reaction is 1-(9Z-octadecenoyl)-sn-glycero-3-phosphate + (5Z,8Z,11Z,14Z)-eicosatetraenoyl-CoA = 1-(9Z)-octadecenoyl-2-(5Z,8Z,11Z,14Z)-eicosatetraenoyl-sn-glycero-3-phosphate + CoA. The enzyme catalyses 1-(9Z-octadecenoyl)-sn-glycero-3-phosphate + dodecanoyl-CoA = 1-(9Z)-octadecenoyl-2-dodecanoyl-sn-glycero-3-phosphate + CoA. It carries out the reaction (6Z)-octadecenoyl-CoA + 1-(9Z-octadecenoyl)-sn-glycero-3-phosphate = 1-(9Z)-octadecenoyl-2-(6Z)-octadecenoyl-sn-glycero-3-phosphate + CoA. It catalyses the reaction (11Z)-octadecenoyl-CoA + 1-(9Z-octadecenoyl)-sn-glycero-3-phosphate = 1-(9Z)-octadecenoyl-2-(11Z)-octadecenoyl-sn-glycero-3-phosphate + CoA. The catalysed reaction is (9Z)-hexadecenoyl-CoA + 1-(9Z-octadecenoyl)-sn-glycero-3-phosphate = 1-(9Z-octadecenoyl)-2-(9Z-hexadecenoyl)-sn-glycero-3-phosphate + CoA. It participates in phospholipid metabolism; CDP-diacylglycerol biosynthesis; CDP-diacylglycerol from sn-glycerol 3-phosphate: step 2/3. Converts 1-acyl-sn-glycerol-3-phosphate (lysophosphatidic acid or LPA) into 1,2-diacyl-sn-glycerol-3-phosphate (phosphatidic acid or PA) by incorporating an acyl moiety at the sn-2 position of the glycerol backbone. The chain is 1-acyl-sn-glycerol-3-phosphate acyltransferase alpha (AGPAT1) from Bos taurus (Bovine).